The chain runs to 249 residues: tRNA (guanine-N(1)-)-methyltransferase (249 aa).

S-adenosyl-L-methionine is bound by residues Gly113 and 133–138; that span reads IGDYVL.

This sequence belongs to the RNA methyltransferase TrmD family. As to quaternary structure, homodimer.

It localises to the cytoplasm. It carries out the reaction guanosine(37) in tRNA + S-adenosyl-L-methionine = N(1)-methylguanosine(37) in tRNA + S-adenosyl-L-homocysteine + H(+). Specifically methylates guanosine-37 in various tRNAs. The protein is tRNA (guanine-N(1)-)-methyltransferase of Aeromonas salmonicida (strain A449).